The sequence spans 983 residues: Next to BRCA1 gene 1 protein (983 aa).

The PB1 domain occupies Q4 to G86. Residue S117 is modified to Phosphoserine. A disordered region spans residues M126 to D149. Residues S214–V266 form a ZZ-type zinc finger. Zn(2+)-binding residues include C219, C222, C233, C236, C242, C245, H252, and H256. 2 ATG8 family proteins-binding regions span residues A544–V638 and A745–E756. The residue at position 588 (T588) is a Phosphothreonine. A phosphoserine mark is found at S592 and S598. The tract at residues E611 to L645 is disordered. Residues M768 to I813 form a disordered region. The segment covering A795–P808 has biased composition (basic and acidic residues). S855 carries the post-translational modification Phosphoserine. The tract at residues D867 to N894 is disordered. The UBA domain maps to S930 to N974.

In terms of assembly, homooligomer and heterooligomer. Interacts with TRIM55. Interacts with titin/TTN. Interacts with RNF29, USP8, MAP1LC3A, MAP1LC3B, MAP1LC3C, GABARAP, GABARAPL1 and GABARAPL2. Binds to ubiquitin and ubiquitinated proteins. Interacts with SQSTM1. Interacts with TAX1BP1. Interacts with IRF3; this interaction mediates autophagic degradation of IRF3. Interacts with IL12A and IL12B. Post-translationally, phosphorylated by GSK3A; this phosphorylation inhibits NBR1 involvement in the formation of ubiquitinated protein aggregates.

It is found in the cytoplasm. The protein resides in the cytoplasmic vesicle. The protein localises to the autophagosome. Its subcellular location is the lysosome. It localises to the myofibril. It is found in the sarcomere. The protein resides in the m line. In terms of biological role, ubiquitin-binding autophagy adapter that participates in different processes including host defense or intracellular homeostasis. Possesses a double function during the selective autophagy by acting as a shuttle bringing ubiquitinated proteins to autophagosomes and also by participating in the formation of protein aggregates. Plays a role in the regulation of the innate immune response by modulating type I interferon production and targeting ubiquitinated IRF3 for autophagic degradation. In response to oxidative stress, promotes an increase in SQSTM1 levels, phosphorylation, and body formation by preventing its autophagic degradation. In turn, activates the KEAP1-NRF2/NFE2L2 antioxidant pathway. Also plays non-autophagy role by mediating the shuttle of IL-12 to late endosome for subsequent secretion. The polypeptide is Next to BRCA1 gene 1 protein (Nbr1) (Rattus norvegicus (Rat)).